A 554-amino-acid polypeptide reads, in one-letter code: 3-(3-hydroxy-phenyl)propionate/3-hydroxycinnamic acid hydroxylase (554 aa).

Residues 17 to 46 and 285 to 295 contribute to the FAD site; these read QVAI…LVEK and FRIDRVLLAGD.

This sequence belongs to the PheA/TfdB FAD monooxygenase family. The cofactor is FAD.

The enzyme catalyses 3-(3-hydroxyphenyl)propanoate + NADH + O2 + H(+) = 3-(2,3-dihydroxyphenyl)propanoate + NAD(+) + H2O. It carries out the reaction (2E)-3-(3-hydroxyphenyl)prop-2-enoate + NADH + O2 + H(+) = (2E)-3-(2,3-dihydroxyphenyl)prop-2-enoate + NAD(+) + H2O. Its pathway is aromatic compound metabolism; 3-phenylpropanoate degradation. Functionally, catalyzes the insertion of one atom of molecular oxygen into position 2 of the phenyl ring of 3-(3-hydroxyphenyl)propionate (3-HPP) and hydroxycinnamic acid (3HCI). This chain is 3-(3-hydroxy-phenyl)propionate/3-hydroxycinnamic acid hydroxylase, found in Klebsiella pneumoniae (strain 342).